A 339-amino-acid chain; its full sequence is UDP-N-acetylglucosamine/UDP-N-acetylgalactosamine transporter nstp-4 (339 aa).

The next 8 membrane-spanning stretches (helical) occupy residues 44-64 (LSSTAVVCAEIIKLITCFFVI), 94-114 (LKVAVPAIMYVIQNNLLFFAL), 148-168 (YNWMALILLTAGVALVQYPSG), 186-206 (ILGLGAVLAACFSSGFAGVYF), 224-244 (LAFFSVFGALLVCWLYDWQAI), 255-275 (GVIWIVVLLQAYGGLVIALVV), 281-301 (ILKGFAVSLSIILSSFTSWLV), and 305-325 (LTITTTFAIGATVVIFATFLY).

This sequence belongs to the nucleotide-sugar transporter family. SLC35A subfamily. Widely expressed, including in pharynx and pharyngeal gland cells, seam cells, spermatheca, stomatointestinal muscle, vulva, and body wall muscle.

It is found in the golgi apparatus membrane. Uridine diphosphate-N-acetylglucosamine (UDP-GlcNAc) transporter in the Golgi apparatus. UDP-N-acetylgalactosamine (UDP-GalNAc) transporter in the Golgi apparatus. Apparently transports UDP-GlcNAc and UDP-GalNAc simultaneously, and independently, by an unknown mechanism. Functions redundantly with nucleotide sugar transporter srf-3. May be involved in gonadal development. This chain is UDP-N-acetylglucosamine/UDP-N-acetylgalactosamine transporter nstp-4, found in Caenorhabditis elegans.